The following is a 235-amino-acid chain: Leucyl/phenylalanyl-tRNA--protein transferase (235 aa).

This sequence belongs to the L/F-transferase family.

Its subcellular location is the cytoplasm. The catalysed reaction is N-terminal L-lysyl-[protein] + L-leucyl-tRNA(Leu) = N-terminal L-leucyl-L-lysyl-[protein] + tRNA(Leu) + H(+). It catalyses the reaction N-terminal L-arginyl-[protein] + L-leucyl-tRNA(Leu) = N-terminal L-leucyl-L-arginyl-[protein] + tRNA(Leu) + H(+). It carries out the reaction L-phenylalanyl-tRNA(Phe) + an N-terminal L-alpha-aminoacyl-[protein] = an N-terminal L-phenylalanyl-L-alpha-aminoacyl-[protein] + tRNA(Phe). Its function is as follows. Functions in the N-end rule pathway of protein degradation where it conjugates Leu, Phe and, less efficiently, Met from aminoacyl-tRNAs to the N-termini of proteins containing an N-terminal arginine or lysine. This Anaeromyxobacter sp. (strain Fw109-5) protein is Leucyl/phenylalanyl-tRNA--protein transferase.